We begin with the raw amino-acid sequence, 386 residues long: Rhomboid domain-containing protein 3 (386 aa).

The next 5 helical transmembrane spans lie at 20–40 (VLML…LVLA), 58–78 (LGHT…TVGW), 92–112 (ASAL…GLGL), 141–161 (GALP…LLSS), and 163–183 (PPFL…AGAF). A UBA domain is found at 324–362 (VSSLRLQQLERMGFPTEQAVVALAATGRVEGAVSLLVGG).

Its subcellular location is the membrane. The polypeptide is Rhomboid domain-containing protein 3 (RHBDD3) (Homo sapiens (Human)).